The following is a 423-amino-acid chain: GTPase ERA-like, chloroplastic (423 aa).

Residues 1–60 (MELGLALRLVAPPPRLPCRALQPPPMPCFSPCAARRSRIRSSRLERRVGVVVSGGSMASL) constitute a chloroplast transit peptide. Residues 124-294 (RSGYVAVLGK…KEWILSKLPL (171 aa)) form the Era-type G domain. The segment at 132–139 (GKPNVGKS) is G1. Position 132–139 (132–139 (GKPNVGKS)) interacts with GTP. Positions 158-162 (QTTRH) are G2. Positions 179-182 (DTPG) are G3. GTP-binding positions include 179–183 (DTPGV) and 244–247 (NKKD). The interval 244–247 (NKKD) is G4. Residues 273 to 275 (ISA) form a G5 region. The KH type-2 domain occupies 325–402 (YRQEIPYACQ…YLEIMVKVKE (78 aa)).

This sequence belongs to the TRAFAC class TrmE-Era-EngA-EngB-Septin-like GTPase superfamily. Era GTPase family.

The protein localises to the plastid. Its subcellular location is the chloroplast stroma. The protein resides in the chloroplast nucleoid. Nuclear genome-encoded probable GTPase involved in ribosome biogenesis in chloroplasts. Plays a role in 16S rRNA maturation in plastids and may contribute to the assembly of the small (30S) ribosomal subunit. This Oryza sativa subsp. japonica (Rice) protein is GTPase ERA-like, chloroplastic.